The following is a 211-amino-acid chain: Mitotic spindle assembly checkpoint protein MAD2B (211 aa).

Positions 13-203 constitute an HORMA domain; the sequence is QVVADVLCEF…SDILKMQLYV (191 aa). The tract at residues 21–155 is mediates interaction with REV1 and REV3L and homodimerization; that stretch reads EFLEVAVHLI…FTVLVHTREA (135 aa).

As to quaternary structure, homooligomer. Heterodimer with REV3L. This dimer forms the minimal DNA polymerase zeta complex (Pol-zeta2), with REV3L bearing DNA polymerase catalytic activity, although its activity is very low in this context. Component of the tetrameric Pol-zeta complex (Pol-zeta4), which consists of REV3L, MAD2L2, POLD2 and POLD3; Pol-zeta4 is the fully active form of DNA polymerase zeta. Component of the shieldin complex, consisting of SHLD1, SHLD2, SHLD3 and MAD2L2/REV7. Within the complex, SHLD2 forms a scaffold which interacts with a SHLD3-MAD2L2 subcomplex via its N-terminus, and with SHLD1 via its C-terminus. Interacts with REV1. Interacts with ADAM9. Interacts with CHAMP1. Interacts with FZR1 (in complex with the anaphase promoting complex APC). May interact with CDC20. Interacts with RAN. Interacts with ELK1; the interaction is direct and recruits MAD2L2 to ELK1-specific promoters. May interact with the JNK kinases MAPK8 and/or MAPK9 to stimulate ELK1 phosphorylation and transcriptional activity upon DNA damage. Interacts with TCF7L2; prevents its binding to promoters and negatively modulates its transcriptional activity. Interacts with YY1AP1. Interacts with PRCC; the interaction is direct. Interacts with POGZ. Interacts with ASTE1.

The protein resides in the nucleus. The protein localises to the cytoplasm. It is found in the cytoskeleton. Its subcellular location is the spindle. Its function is as follows. Adapter protein able to interact with different proteins and involved in different biological processes. Mediates the interaction between the error-prone DNA polymerase zeta catalytic subunit REV3L and the inserter polymerase REV1, thereby mediating the second polymerase switching in translesion DNA synthesis. Translesion DNA synthesis releases the replication blockade of replicative polymerases, stalled in presence of DNA lesions. Component of the shieldin complex, which plays an important role in repair of DNA double-stranded breaks (DSBs). During G1 and S phase of the cell cycle, the complex functions downstream of TP53BP1 to promote non-homologous end joining (NHEJ) and suppress DNA end resection. Mediates various NHEJ-dependent processes including immunoglobulin class-switch recombination, and fusion of unprotected telomeres. May also regulate another aspect of cellular response to DNA damage through regulation of the JNK-mediated phosphorylation and activation of the transcriptional activator ELK1. Inhibits the FZR1- and probably CDC20-mediated activation of the anaphase promoting complex APC thereby regulating progression through the cell cycle. Regulates TCF7L2-mediated gene transcription and may play a role in epithelial-mesenchymal transdifferentiation. In Bos taurus (Bovine), this protein is Mitotic spindle assembly checkpoint protein MAD2B (MAD2L2).